We begin with the raw amino-acid sequence, 299 residues long: Heterodisulfide reductase subunit B-like protein (299 aa).

Belongs to the HdrB family. In terms of assembly, the heterodisulfide reductase is composed of three subunits; HdlA, HdlB and HdlC. It forms a complex with the F420-non-reducing hydrogenase (Mvh), which provides the reducing equivalents to the heterodisulfide reductase.

It localises to the cytoplasm. Has oxidoreductase activity. The Hdl and Mvh subunits may together mediate electron transfer from hydrogen to an unidentified electron acceptor on the cytoplasmic side of the membrane. The chain is Heterodisulfide reductase subunit B-like protein (hdlB) from Archaeoglobus profundus (strain DSM 5631 / JCM 9629 / NBRC 100127 / Av18).